Here is a 68-residue protein sequence, read N- to C-terminus: Protein SlyX homolog (68 aa).

Belongs to the SlyX family.

The sequence is that of Protein SlyX homolog from Pseudomonas syringae pv. tomato (strain ATCC BAA-871 / DC3000).